Reading from the N-terminus, the 126-residue chain is Holo-[acyl-carrier-protein] synthase (126 aa).

Residues D9 and E58 each coordinate Mg(2+).

It belongs to the P-Pant transferase superfamily. AcpS family. The cofactor is Mg(2+).

The protein resides in the cytoplasm. It carries out the reaction apo-[ACP] + CoA = holo-[ACP] + adenosine 3',5'-bisphosphate + H(+). Functionally, transfers the 4'-phosphopantetheine moiety from coenzyme A to a Ser of acyl-carrier-protein. This Salmonella newport (strain SL254) protein is Holo-[acyl-carrier-protein] synthase.